The sequence spans 426 residues: Histidine--tRNA ligase (426 aa).

Belongs to the class-II aminoacyl-tRNA synthetase family. In terms of assembly, homodimer.

The protein localises to the cytoplasm. It carries out the reaction tRNA(His) + L-histidine + ATP = L-histidyl-tRNA(His) + AMP + diphosphate + H(+). The polypeptide is Histidine--tRNA ligase (Pseudoalteromonas atlantica (strain T6c / ATCC BAA-1087)).